Reading from the N-terminus, the 151-residue chain is Thymosin beta (151 aa).

4 tandem repeats follow at residues 24-29 (LKKVET), 62-67 (LHSTPV), 100-105 (LKKTET), and 134-139 (LHHVET). Residues 24–139 (LKKVETTEKN…DKSALHHVET (116 aa)) form a 4 X 6 AA repeat of L-[KH]-[KSH]-[VT]-[EP]-[TV] region.

Belongs to the thymosin beta family. In terms of assembly, interacts (via repeats 1, 2 and 4) with G-actin in a 1:3 ratio. Interacts (via repeats 2 and 3) with F-actin. In terms of tissue distribution, at the comma stage, enriched in the developing nerve ring (at protein level). Ubiquitously expressed in larvae and adults with enrichment in the spermatheca, the intestinal tract and the posterior bulb of the pharynx (at protein level). Expressed in oocytes and in the gonad (at protein level).

The protein localises to the cytoplasm. Its subcellular location is the cell cortex. It is found in the cell junction. The protein resides in the cytoskeleton. Plays an important role in the organization of the cytoskeleton by regulating actin polymerization in two ways. Firstly, by binding to and sequestering actin monomers (G actin) inhibits actin polymerization. Secondly, by binding directly filamentous actin (F actin) promotes actin polymerization. Regulates the formation of cortical actin in oocytes conferring them enough rigidity to sustain the contractions during ovulation. This is Thymosin beta from Caenorhabditis elegans.